The primary structure comprises 258 residues: Small ribosomal subunit protein uS3 (258 aa).

Positions 43 to 111 (IRKLMSTGLE…QVQLNILEVK (69 aa)) constitute a KH type-2 domain. The disordered stretch occupies residues 217 to 258 (AREQASAAPRARGRADRPRGRRDEGAAPQQAAAPAATTGTEA). The segment covering 229–241 (GRADRPRGRRDEG) has biased composition (basic and acidic residues). Low complexity predominate over residues 242-258 (AAPQQAAAPAATTGTEA).

Belongs to the universal ribosomal protein uS3 family. Part of the 30S ribosomal subunit. Forms a tight complex with proteins S10 and S14.

In terms of biological role, binds the lower part of the 30S subunit head. Binds mRNA in the 70S ribosome, positioning it for translation. This is Small ribosomal subunit protein uS3 from Beutenbergia cavernae (strain ATCC BAA-8 / DSM 12333 / CCUG 43141 / JCM 11478 / NBRC 16432 / NCIMB 13614 / HKI 0122).